Here is a 223-residue protein sequence, read N- to C-terminus: 2-phospho-L-lactate guanylyltransferase (223 aa).

The protein belongs to the CofC family. As to quaternary structure, homodimer.

The catalysed reaction is (2S)-2-phospholactate + GTP + H(+) = (2S)-lactyl-2-diphospho-5'-guanosine + diphosphate. Its pathway is cofactor biosynthesis; coenzyme F420 biosynthesis. Its function is as follows. Guanylyltransferase that catalyzes the activation of (2S)-2-phospholactate (2-PL) as (2S)-lactyl-2-diphospho-5'-guanosine, via the condensation of 2-PL with GTP. It is involved in the biosynthesis of coenzyme F420, a hydride carrier cofactor. This is 2-phospho-L-lactate guanylyltransferase from Methanothermobacter thermautotrophicus (strain ATCC 29096 / DSM 1053 / JCM 10044 / NBRC 100330 / Delta H) (Methanobacterium thermoautotrophicum).